The sequence spans 392 residues: Phosphopentomutase (392 aa).

Mn(2+) contacts are provided by D10, D282, H287, D323, H324, and H335.

This sequence belongs to the phosphopentomutase family. It depends on Mn(2+) as a cofactor.

The protein localises to the cytoplasm. The catalysed reaction is 2-deoxy-alpha-D-ribose 1-phosphate = 2-deoxy-D-ribose 5-phosphate. The enzyme catalyses alpha-D-ribose 1-phosphate = D-ribose 5-phosphate. It participates in carbohydrate degradation; 2-deoxy-D-ribose 1-phosphate degradation; D-glyceraldehyde 3-phosphate and acetaldehyde from 2-deoxy-alpha-D-ribose 1-phosphate: step 1/2. Its function is as follows. Isomerase that catalyzes the conversion of deoxy-ribose 1-phosphate (dRib-1-P) and ribose 1-phosphate (Rib-1-P) to deoxy-ribose 5-phosphate (dRib-5-P) and ribose 5-phosphate (Rib-5-P), respectively. This Dictyoglomus thermophilum (strain ATCC 35947 / DSM 3960 / H-6-12) protein is Phosphopentomutase.